The sequence spans 365 residues: Ribosomal RNA large subunit methyltransferase F (365 aa).

Positions 1–48 (MSKPAVKSVQSATAKTATRAVNIRQKVKAPKQAKPEGKGSTKPVKDRP) are disordered. Positions 33–48 (AKPEGKGSTKPVKDRP) are enriched in basic and acidic residues.

Belongs to the methyltransferase superfamily. METTL16/RlmF family.

The protein localises to the cytoplasm. The enzyme catalyses adenosine(1618) in 23S rRNA + S-adenosyl-L-methionine = N(6)-methyladenosine(1618) in 23S rRNA + S-adenosyl-L-homocysteine + H(+). Functionally, specifically methylates the adenine in position 1618 of 23S rRNA. The sequence is that of Ribosomal RNA large subunit methyltransferase F from Shewanella baltica (strain OS223).